The chain runs to 99 residues: SAGA-associated factor 11 (99 aa).

The SGF11-type zinc finger occupies 71-92; that stretch reads IHCENCGRDVSANRLAAHLQRC.

The protein belongs to the SGF11 family. As to quaternary structure, component of the 1.8 MDa SAGA transcription coactivator-HAT complex. SAGA is built of 5 distinct domains with specialized functions. Within the SAGA complex, SUS1, SGF11, SGF73 and UBP8 form an additional subcomplex of SAGA called the DUB module (deubiquitination module). Interacts directly with SGF73, SUS1 and UBP8.

Its subcellular location is the nucleus. In terms of biological role, functions as a component of the transcription regulatory histone acetylation (HAT) complex SAGA. At the promoters, SAGA is required for recruitment of the basal transcription machinery. It influences RNA polymerase II transcriptional activity through different activities such as TBP interaction and promoter selectivity, interaction with transcription activators, and chromatin modification through histone acetylation and deubiquitination. SAGA acetylates nucleosomal histone H3 to some extent (to form H3K9ac, H3K14ac, H3K18ac and H3K23ac). SAGA interacts with DNA via upstream activating sequences (UASs). Involved in transcriptional regulation of a subset of SAGA-regulated genes. Within the SAGA complex, participates in a subcomplex, that specifically deubiquitinates histones H2B. This is SAGA-associated factor 11 from Saccharomyces cerevisiae (strain RM11-1a) (Baker's yeast).